A 391-amino-acid chain; its full sequence is Phosphoglycerate kinase (391 aa).

Residues 21–23, R36, 59–62, R113, and R146 contribute to the substrate site; these read DLN and HLGR. Residues K197, E319, and 345–348 each bind ATP; that span reads GGDT.

This sequence belongs to the phosphoglycerate kinase family. In terms of assembly, monomer.

The protein resides in the cytoplasm. It carries out the reaction (2R)-3-phosphoglycerate + ATP = (2R)-3-phospho-glyceroyl phosphate + ADP. It functions in the pathway carbohydrate degradation; glycolysis; pyruvate from D-glyceraldehyde 3-phosphate: step 2/5. This Colwellia psychrerythraea (strain 34H / ATCC BAA-681) (Vibrio psychroerythus) protein is Phosphoglycerate kinase.